We begin with the raw amino-acid sequence, 190 residues long: Adenylate kinase (190 aa).

Residue 11-16 (GSGKGT) coordinates ATP. The segment at 31 to 60 (STGDVLRGEMKAETELGKIAKDYIEKGQLV) is NMP. Residues T32, R37, 58-60 (QLV), 86-89 (GFPR), and Q93 contribute to the AMP site. The interval 127–137 (ERGKVSGRSDD) is LID. Position 128 (R128) interacts with ATP. Residues R134 and R145 each coordinate AMP. ATP is bound at residue G173.

This sequence belongs to the adenylate kinase family. In terms of assembly, monomer.

It localises to the cytoplasm. It catalyses the reaction AMP + ATP = 2 ADP. It functions in the pathway purine metabolism; AMP biosynthesis via salvage pathway; AMP from ADP: step 1/1. Functionally, catalyzes the reversible transfer of the terminal phosphate group between ATP and AMP. Plays an important role in cellular energy homeostasis and in adenine nucleotide metabolism. The chain is Adenylate kinase from Parabacteroides distasonis (strain ATCC 8503 / DSM 20701 / CIP 104284 / JCM 5825 / NCTC 11152).